The primary structure comprises 248 residues: MEWTDDGIVLGLRRHGESSAVLELLTREHGRHLGLVRGASGARMRPMLQPGNTVRAVWRARLDEHLGMYAIDGLTLRAAELMSVAHGAYGVTHLAALARLLPERDPHQEMYLRLEHALDDFAEAGGAAVHIVRFELAILAELGFGLDLESCAATGETTDLVYVSPKSGGAVSRSAGAPWADRLLPLPPFLRESEDDHGFSDQDLLDGFRLTGLFLLRHVLEPRGQGHSDAREGFINAVTRARARLAQV.

Belongs to the RecO family.

In terms of biological role, involved in DNA repair and RecF pathway recombination. The protein is DNA repair protein RecO of Bradyrhizobium sp. (strain BTAi1 / ATCC BAA-1182).